Here is a 368-residue protein sequence, read N- to C-terminus: RNA polymerase sigma factor SigA (368 aa).

The disordered stretch occupies residues 60–86 (VVDENGDPSEHSLKKDEKEAEKAQAED). Over residues 67–84 (PSEHSLKKDEKEAEKAQA) the composition is skewed to basic and acidic residues. Positions 135-205 (LAEANLRLVV…TRAIADQART (71 aa)) are sigma-70 factor domain-2. The short motif at 159 to 162 (DLIQ) is the Interaction with polymerase core subunit RpoC element. The segment at 214–290 (ETINKLIRIQ…DQDATSPAEH (77 aa)) is sigma-70 factor domain-3. The interval 303-356 (VLDTLTDREENVLRLRFGLDDGRTRTLEEVGKVFGVTRERIRQIEAKALRKLRH) is sigma-70 factor domain-4. Positions 329 to 348 (LEEVGKVFGVTRERIRQIEA) form a DNA-binding region, H-T-H motif.

This sequence belongs to the sigma-70 factor family. RpoD/SigA subfamily. In terms of assembly, interacts transiently with the RNA polymerase catalytic core.

Its subcellular location is the cytoplasm. Its function is as follows. Sigma factors are initiation factors that promote the attachment of RNA polymerase to specific initiation sites and are then released. This sigma factor is the primary sigma factor during exponential growth. In Enterococcus faecalis (strain ATCC 700802 / V583), this protein is RNA polymerase sigma factor SigA.